Consider the following 590-residue polypeptide: Aspartate--tRNA(Asp/Asn) ligase (590 aa).

Glutamate 176 is a binding site for L-aspartate. The interval 200–203 is aspartate; the sequence is QLFK. Residues arginine 222 and histidine 451 each coordinate L-aspartate. 222–224 contributes to the ATP binding site; it reads RDE. An ATP-binding site is contributed by glutamate 485. Arginine 492 contributes to the L-aspartate binding site. Residue 537 to 540 participates in ATP binding; sequence GIDR.

Belongs to the class-II aminoacyl-tRNA synthetase family. Type 1 subfamily. As to quaternary structure, homodimer.

The protein resides in the cytoplasm. The enzyme catalyses tRNA(Asx) + L-aspartate + ATP = L-aspartyl-tRNA(Asx) + AMP + diphosphate. Functionally, aspartyl-tRNA synthetase with relaxed tRNA specificity since it is able to aspartylate not only its cognate tRNA(Asp) but also tRNA(Asn). Reaction proceeds in two steps: L-aspartate is first activated by ATP to form Asp-AMP and then transferred to the acceptor end of tRNA(Asp/Asn). The chain is Aspartate--tRNA(Asp/Asn) ligase from Ehrlichia ruminantium (strain Welgevonden).